Consider the following 52-residue polypeptide: Unknown protein from spot 415 of 2D-PAGE of etiolated coleoptile (52 aa).

This is Unknown protein from spot 415 of 2D-PAGE of etiolated coleoptile from Zea mays (Maize).